A 160-amino-acid polypeptide reads, in one-letter code: Sec-independent protein translocase protein TatB (160 aa).

The helical transmembrane segment at 1–21 (MFGMGFFEILVVLVVAIIFLG) threads the bilayer. The interval 118–160 (HLNEEVSNEEALNKEVSSDESPKEVQLATDNNTKEHDKEKENV) is disordered. Composition is skewed to basic and acidic residues over residues 128-140 (ALNKEVSSDESPK) and 149-160 (NTKEHDKEKENV).

It belongs to the TatB family. The Tat system comprises two distinct complexes: a TatABC complex, containing multiple copies of TatA, TatB and TatC subunits, and a separate TatA complex, containing only TatA subunits. Substrates initially bind to the TatABC complex, which probably triggers association of the separate TatA complex to form the active translocon.

It localises to the cell inner membrane. In terms of biological role, part of the twin-arginine translocation (Tat) system that transports large folded proteins containing a characteristic twin-arginine motif in their signal peptide across membranes. Together with TatC, TatB is part of a receptor directly interacting with Tat signal peptides. TatB may form an oligomeric binding site that transiently accommodates folded Tat precursor proteins before their translocation. In Helicobacter pylori (strain ATCC 700392 / 26695) (Campylobacter pylori), this protein is Sec-independent protein translocase protein TatB.